A 107-amino-acid polypeptide reads, in one-letter code: Sulmotoxin 1 (107 aa).

The first 19 residues, 1-19, serve as a signal peptide directing secretion; it reads MKTLLLALAVVVLVCLGSA. Residues 20–34 constitute a propeptide that is removed on maturation; the sequence is NELGLGRQRVDRRRR. 5 disulfides stabilise this stretch: Cys44-Cys68, Cys47-Cys55, Cys61-Cys83, Cys87-Cys98, and Cys99-Cys104.

This sequence belongs to the three-finger toxin family. Ancestral subfamily. Boigatoxin sub-subfamily. Monomer. In terms of tissue distribution, expressed by the venom gland.

It localises to the secreted. Mammal-specific neurotoxin (tested on mice). Not toxic to lizards (tested on geckos). The chain is Sulmotoxin 1 from Spilotes sulphureus (Amazon puffing snake).